A 294-amino-acid chain; its full sequence is MQQRTIQKAVEVVGIGLHKGEPIRLRLEPLSANAGIVFYREDLALNIPLSPDSVIDTRMATVIGSEKGFISTIEHFLSAVYAYGIDNMRVIVDGNEMPIMDGSSISFCLLLDEAGIKELDVPKKVICVKKAVEIKEGDKFVRLLPSDKATFDFRIKFDHPVIGVQSESFEFGTHNFIEEIARARTFGFAKDIQYLQSQNLALGATLQNAIGLDDHKVLNPEGLRFENEFARHKILDAMGDMMVSGHNILAKYESFAGSHNLNYRLTSKLLADSRNYEFVTVKELQSRAFAKSFA.

The Zn(2+) site is built by His75, His232, and Asp236. His259 functions as the Proton donor in the catalytic mechanism.

It belongs to the LpxC family. Zn(2+) is required as a cofactor.

The catalysed reaction is a UDP-3-O-[(3R)-3-hydroxyacyl]-N-acetyl-alpha-D-glucosamine + H2O = a UDP-3-O-[(3R)-3-hydroxyacyl]-alpha-D-glucosamine + acetate. The protein operates within glycolipid biosynthesis; lipid IV(A) biosynthesis; lipid IV(A) from (3R)-3-hydroxytetradecanoyl-[acyl-carrier-protein] and UDP-N-acetyl-alpha-D-glucosamine: step 2/6. Functionally, catalyzes the hydrolysis of UDP-3-O-myristoyl-N-acetylglucosamine to form UDP-3-O-myristoylglucosamine and acetate, the committed step in lipid A biosynthesis. In Sulfurovum sp. (strain NBC37-1), this protein is UDP-3-O-acyl-N-acetylglucosamine deacetylase.